A 480-amino-acid polypeptide reads, in one-letter code: Glutathione reductase (480 aa).

Positions 31 and 32 each coordinate FAD. Ser-31 serves as a coordination point for glutathione. A glutathione-binding site is contributed by Arg-38. FAD is bound by residues Glu-51, Thr-58, Cys-59, and Lys-67. A disulfide bond links Cys-59 and Cys-64. Tyr-121 contacts glutathione. Ala-137 is a binding site for FAD. NADP(+)-binding residues include Ile-206, Glu-209, Arg-226, and Gly-291. Asp-331 is an FAD binding site. Glu-337 is an NADP(+) binding site. Residue Thr-339 participates in FAD binding. Arg-347 contacts glutathione. Val-372 serves as a coordination point for NADP(+). Position 422 (Lys-422) interacts with glutathione. His-469 is an FAD binding site. The active-site Proton acceptor is His-469.

This sequence belongs to the class-I pyridine nucleotide-disulfide oxidoreductase family. Homodimer. It depends on FAD as a cofactor.

The protein resides in the cytoplasm. It is found in the mitochondrion. It carries out the reaction 2 glutathione + NADP(+) = glutathione disulfide + NADPH + H(+). Catalyzes the reduction of glutathione disulfide (GSSG) to reduced glutathione (GSH). Constitutes the major mechanism to maintain a high GSH:GSSG ratio in the cytosol. The protein is Glutathione reductase (GLR1) of Eremothecium gossypii (strain ATCC 10895 / CBS 109.51 / FGSC 9923 / NRRL Y-1056) (Yeast).